Here is a 260-residue protein sequence, read N- to C-terminus: MLTFVGLGLYDEASVTVAGRDAIAAADRVFAEFYTSRLIGTDVAALEAHHDTTIERRDRAGVEQHPEPILDAAADGDAVFLTAGDTMISTTHVDLRMRAADRGIDTRVIHAPTAASAAAGLTGLQNYRFGKATTLPFPWAHGADGVPGSVTDTIEANRERGLHTLVYLDIKVDHPRVDGDAYMTASQAADLLATNWDADALGVVVARAGAPDATVRADRLGALADADFGSPLHLLVVPGSLHHIERDALRELAGAPADAL.

Residues Leu-9, Asp-85, Ile-88, 113–114, Leu-168, Ala-208, and His-233 contribute to the S-adenosyl-L-methionine site; that span reads TA.

It belongs to the diphthine synthase family. As to quaternary structure, homodimer.

It catalyses the reaction 2-[(3S)-amino-3-carboxypropyl]-L-histidyl-[translation elongation factor 2] + 3 S-adenosyl-L-methionine = diphthine-[translation elongation factor 2] + 3 S-adenosyl-L-homocysteine + 3 H(+). It functions in the pathway protein modification; peptidyl-diphthamide biosynthesis. Its function is as follows. S-adenosyl-L-methionine-dependent methyltransferase that catalyzes the trimethylation of the amino group of the modified target histidine residue in translation elongation factor 2 (EF-2), to form an intermediate called diphthine. The three successive methylation reactions represent the second step of diphthamide biosynthesis. The polypeptide is Diphthine synthase (Halobacterium salinarum (strain ATCC 29341 / DSM 671 / R1)).